The primary structure comprises 531 residues: MEKVRSRVGWLYRRQDSQGAVQLRKRKSRLYSKEASSACPGAGLFGENTYLVLAAVGFRIFNCMMVQTSFVPDEYWQSLEVAHNMTFNYGYLTWEWTEGLRGFSYPLMFAAIYKVLYLLGKDHVWFLIWIPRLAQAVLSGIADVRLYSLVRHLENTELAKWVYFCQLCSWFTWYCATRTLTNTMEAVLSTFALYYYPLEGSSTNSSTKYLICVALAFLIRPTAVILWIPLLFYHFAKEKKKAELVVQQYLPIGILTLAASLTVDRIFFGKWTFVQWNFLKFNVLQDLGSFYGSHPWHWYITQGVPVILCTHLPFFIHGCMVTPKRYQILLVAVAWTVLTYSALSHKEFRFIYPVLPVCMVFCGFSFSNLKRWKKAAVGFLVLSNLFPALYTGLIHQRGALDIMSGIQKLCKMENSSASLFVLMPCHSIPFYSHVHCPIKMNFLECPPDLSDSDAYIDEADLFYVSPLAWLNAEFYNKTLLPTHLIMFSVLEPEIRSFLTNNNYLKSMSVFHTHLPEGRTGSHIYMYERNSK.

Asn-84 carries N-linked (GlcNAc...) asparagine glycosylation. 3 helical membrane passes run 99–119 (GLRG…LYLL), 124–144 (VWFL…IADV), and 174–196 (YCAT…LYYY). Asn-204 carries an N-linked (GlcNAc...) asparagine glycan. The next 6 membrane-spanning stretches (helical) occupy residues 210-230 (LICV…WIPL), 249-269 (YLPI…IFFG), 303-323 (GVPV…MVTP), 328-348 (ILLV…HKEF), 350-370 (FIYP…SNLK), and 375-395 (AAVG…GLIH). 2 N-linked (GlcNAc...) asparagine glycosylation sites follow: Asn-414 and Asn-476.

The protein belongs to the glycosyltransferase 22 family. PIGB subfamily.

The protein localises to the endoplasmic reticulum membrane. It functions in the pathway glycolipid biosynthesis; glycosylphosphatidylinositol-anchor biosynthesis. In terms of biological role, alpha-1,2-mannosyltransferase that catalyzes the transfer of the third mannose, via an alpha-1,2 bond, from a dolichol-phosphate-mannose (Dol-P-Man) to an alpha-D-Man-(1-&gt;6)-2-PEtn-alpha-D-Man-(1-&gt;4)-alpha-D-GlcN-(1-&gt;6)-(1-radyl,2-acyl-sn-glycero-3-phospho)-2-acyl-inositol intermediate to generate an alpha-D-Man-(1-&gt;2)-alpha-D-Man-(1-&gt;6)-2-PEtn-alpha-D-Man-(1-&gt;4)-alpha-D-GlcN-(1-&gt;6)-(1-radyl,2-acyl-sn-glycero-3-phospho)-2-acyl-inositol (also termed H6) and participates in the nineth step of the glycosylphosphatidylinositol-anchor biosynthesis. May also add the third mannose to an alpha-D-Man-(1-&gt;6)-alpha-D-Man-(1-&gt;4)-alpha-D-GlcN-(1-&gt;6)-(1-radyl,2-acyl-sn-glycero-3-phospho)-2-acyl-inositol (also termed H3) intermediate generating an alpha-D-Man-(1-&gt;2)-alpha-D-Man-(1-&gt;6)-alpha-D-Man-(1-&gt;4)-alpha-D-GlcN-(1-&gt;6)-(1-radyl,2-acyl-sn-glycero-3-phospho)-2-acyl-inositol (also termed H4). The chain is GPI alpha-1,2-mannosyltransferase 3 from Xenopus laevis (African clawed frog).